Reading from the N-terminus, the 223-residue chain is Urease accessory protein UreF (223 aa).

This sequence belongs to the UreF family. In terms of assembly, ureD, UreF and UreG form a complex that acts as a GTP-hydrolysis-dependent molecular chaperone, activating the urease apoprotein by helping to assemble the nickel containing metallocenter of UreC. The UreE protein probably delivers the nickel.

The protein localises to the cytoplasm. Functionally, required for maturation of urease via the functional incorporation of the urease nickel metallocenter. In Rhizobium etli (strain ATCC 51251 / DSM 11541 / JCM 21823 / NBRC 15573 / CFN 42), this protein is Urease accessory protein UreF.